The sequence spans 97 residues: Co-chaperonin GroES (97 aa).

It belongs to the GroES chaperonin family. In terms of assembly, heptamer of 7 subunits arranged in a ring. Interacts with the chaperonin GroEL.

It localises to the cytoplasm. Functionally, together with the chaperonin GroEL, plays an essential role in assisting protein folding. The GroEL-GroES system forms a nano-cage that allows encapsulation of the non-native substrate proteins and provides a physical environment optimized to promote and accelerate protein folding. GroES binds to the apical surface of the GroEL ring, thereby capping the opening of the GroEL channel. In Symbiobacterium thermophilum (strain DSM 24528 / JCM 14929 / IAM 14863 / T), this protein is Co-chaperonin GroES.